We begin with the raw amino-acid sequence, 395 residues long: Elongation factor Tu (395 aa).

A tr-type G domain is found at 10-204; the sequence is KPHLNIGTIG…AVDNWIEEPV (195 aa). The interval 19–26 is G1; the sequence is GHVDHGKT. 19–26 provides a ligand contact to GTP; sequence GHVDHGKT. Residue threonine 26 participates in Mg(2+) binding. The tract at residues 60 to 64 is G2; it reads GITIN. The interval 81-84 is G3; sequence DCPG. GTP-binding positions include 81-85 and 136-139; these read DCPGH and NKVD. The G4 stretch occupies residues 136–139; that stretch reads NKVD. The segment at 174–176 is G5; it reads SAL.

It belongs to the TRAFAC class translation factor GTPase superfamily. Classic translation factor GTPase family. EF-Tu/EF-1A subfamily. As to quaternary structure, monomer.

The protein resides in the cytoplasm. It carries out the reaction GTP + H2O = GDP + phosphate + H(+). In terms of biological role, GTP hydrolase that promotes the GTP-dependent binding of aminoacyl-tRNA to the A-site of ribosomes during protein biosynthesis. The sequence is that of Elongation factor Tu from Flavobacterium johnsoniae (strain ATCC 17061 / DSM 2064 / JCM 8514 / BCRC 14874 / CCUG 350202 / NBRC 14942 / NCIMB 11054 / UW101) (Cytophaga johnsonae).